The sequence spans 162 residues: UPF0260 protein CC_3276 (162 aa).

This sequence belongs to the UPF0260 family.

The polypeptide is UPF0260 protein CC_3276 (Caulobacter vibrioides (strain ATCC 19089 / CIP 103742 / CB 15) (Caulobacter crescentus)).